The primary structure comprises 349 residues: DNA polymerase IV (349 aa).

Residues 3 to 187 (VLFVDFDYFF…LDISKVPGVG (185 aa)) enclose the UmuC domain. Residues Asp-7 and Asp-105 each coordinate Mg(2+). Residue Glu-106 is part of the active site.

It belongs to the DNA polymerase type-Y family. In terms of assembly, monomer. Requires Mg(2+) as cofactor.

Its subcellular location is the cytoplasm. It carries out the reaction DNA(n) + a 2'-deoxyribonucleoside 5'-triphosphate = DNA(n+1) + diphosphate. Poorly processive, error-prone DNA polymerase involved in untargeted mutagenesis. Copies undamaged DNA at stalled replication forks, which arise in vivo from mismatched or misaligned primer ends. These misaligned primers can be extended by PolIV. Exhibits no 3'-5' exonuclease (proofreading) activity. May be involved in translesional synthesis. This Metallosphaera sedula (strain ATCC 51363 / DSM 5348 / JCM 9185 / NBRC 15509 / TH2) protein is DNA polymerase IV.